An 84-amino-acid chain; its full sequence is Cell division topological specificity factor (84 aa).

Belongs to the MinE family.

Its function is as follows. Prevents the cell division inhibition by proteins MinC and MinD at internal division sites while permitting inhibition at polar sites. This ensures cell division at the proper site by restricting the formation of a division septum at the midpoint of the long axis of the cell. This chain is Cell division topological specificity factor, found in Rhodopseudomonas palustris (strain BisA53).